Here is a 227-residue protein sequence, read N- to C-terminus: Protein M1425_1941 (227 aa).

In terms of domain architecture, AMMECR1 spans 15–209 (EIGRFLIEIA…ETRPDGSDII (195 aa)).

The chain is Protein M1425_1941 from Saccharolobus islandicus (strain M.14.25 / Kamchatka #1) (Sulfolobus islandicus).